A 721-amino-acid chain; its full sequence is Teichoic acid poly(glycerol phosphate) polymerase (721 aa).

CDP-glycerol is bound by residues 443-447 (WHGTP), Arg511, 545-546 (PT), 582-584 (RMH), 624-625 (SS), and Asp629.

It belongs to the CDP-glycerol glycerophosphotransferase family.

Its subcellular location is the cell membrane. It carries out the reaction 4-O-[(2R)-glycerylphospho]-N-acetyl-beta-D-mannosaminyl-(1-&gt;4)-N-acetyl-alpha-D-glucosaminyl di-trans,octa-cis-undecaprenyl diphosphate + n CDP-glycerol = 4-O-{[(2R)-1-glycerylphospho](n)-(2R)-1-glycerylphospho}-N-acetyl-beta-D-mannosaminyl-(1-&gt;4)-N-acetyl-alpha-D-glucosaminyl undecaprenyl diphosphate + n CMP + n H(+). The protein operates within cell wall biogenesis; poly(glycerol phosphate) teichoic acid biosynthesis. In terms of biological role, responsible for the polymerization of the main chain of the major teichoic acid by sequential transfer of glycerol phosphate units from CDP-glycerol to the disaccharide linkage unit. Synthesizes polymers of approximately 35 glycerol phosphate units in length. The chain is Teichoic acid poly(glycerol phosphate) polymerase from Staphylococcus epidermidis (strain ATCC 35984 / DSM 28319 / BCRC 17069 / CCUG 31568 / BM 3577 / RP62A).